The primary structure comprises 403 residues: Argininosuccinate synthase (403 aa).

Residues 10 to 18 (AYSGGLDTS) and Ala37 contribute to the ATP site. Tyr89 is a binding site for L-citrulline. Residue Gly119 participates in ATP binding. The L-aspartate site is built by Thr121, Asn125, and Asp126. Asn125 provides a ligand contact to L-citrulline. L-citrulline is bound by residues Arg129, Ser178, Ser187, Glu263, and Tyr275.

The protein belongs to the argininosuccinate synthase family. Type 1 subfamily. As to quaternary structure, homotetramer.

It is found in the cytoplasm. It catalyses the reaction L-citrulline + L-aspartate + ATP = 2-(N(omega)-L-arginino)succinate + AMP + diphosphate + H(+). The protein operates within amino-acid biosynthesis; L-arginine biosynthesis; L-arginine from L-ornithine and carbamoyl phosphate: step 2/3. In Idiomarina loihiensis (strain ATCC BAA-735 / DSM 15497 / L2-TR), this protein is Argininosuccinate synthase.